Consider the following 405-residue polypeptide: Argininosuccinate synthase (405 aa).

Residues 10 to 18 (AYSGGLDTS) and Ala37 contribute to the ATP site. Residues Tyr88 and Ser93 each coordinate L-citrulline. Gly118 contributes to the ATP binding site. The L-aspartate site is built by Thr120, Asn124, and Asp125. Residue Asn124 coordinates L-citrulline. Residues Arg128, Ser179, Ser188, Glu264, and Tyr276 each contribute to the L-citrulline site.

The protein belongs to the argininosuccinate synthase family. Type 1 subfamily. In terms of assembly, homotetramer.

Its subcellular location is the cytoplasm. The enzyme catalyses L-citrulline + L-aspartate + ATP = 2-(N(omega)-L-arginino)succinate + AMP + diphosphate + H(+). Its pathway is amino-acid biosynthesis; L-arginine biosynthesis; L-arginine from L-ornithine and carbamoyl phosphate: step 2/3. The sequence is that of Argininosuccinate synthase from Pseudomonas fluorescens (strain SBW25).